We begin with the raw amino-acid sequence, 35 residues long: Turripeptide gsp9a (35 aa).

A 4-hydroxyproline mark is found at Pro-3 and Pro-4. Disulfide bonds link Cys-7-Cys-22, Cys-12-Cys-26, and Cys-18-Cys-33. A 4-carboxyglutamate mark is found at Glu-14 and Glu-17.

As to expression, expressed by the venom duct.

It is found in the secreted. This chain is Turripeptide gsp9a, found in Gemmula speciosa (Splendid gem-turris).